Consider the following 701-residue polypeptide: Transcriptional regulator Kaiso (701 aa).

The BTB domain occupies 32-94 (CDVTVIVEDR…IYSSKIVRVR (63 aa)). 2 disordered regions span residues 128-158 (GAGG…SPLP) and 181-311 (SSDD…QNQH). Residues 245-258 (TPSSQVQLTQNSLP) show a composition bias toward polar residues. A compositionally biased stretch (low complexity) spans 259-273 (TNQQSSKNTSSTTQK). Residues 278–311 (VNANISKNPTPAANGFLSPTAQKQGTPNAVQNQH) are compositionally biased toward polar residues. A required for methylation dependent DNA-binding region spans residues 470–609 (AKLDLDGLPN…QIRQYAYVNN (140 aa)). 3 consecutive C2H2-type zinc fingers follow at residues 501-523 (YICI…FNVH), 529-551 (YPCR…EIHH), and 557-580 (YQCL…RSVH). Residues 519 to 701 (HFNVHSWEKK…EFEFVIPESY (183 aa)) are required for sequence specific DNA-binding. Positions 644–664 (DIDPDEPQQPASEGNHANSAT) are disordered. The span at 652–664 (QPASEGNHANSAT) shows a compositional bias: polar residues.

In terms of assembly, self associates. Interacts with tcf7l1-A, leading to repression of tcf7l1-A target genes. Interacts with ctnnd1, and this interaction may inhibit DNA-binding. Interacts with ncor1.

It localises to the nucleus. Functionally, transcriptional regulator with bimodal DNA-binding specificity. Binds to methylated CpG dinucleotides in the consensus sequence 5'-CGCG-3' and also binds to the non-methylated consensus sequence 5'-CTGCNA-3'. May recruit the N-CoR repressor complex to promote histone deacetylation and the formation of repressive chromatin structures in target gene promoters. Contributes to the repression of target genes of the Wnt signaling pathway and to the methylation-dependent repression of zygotic transcription prior to the mid-blastula transition (MBT). Also required for gastrulation movements. This Xenopus laevis (African clawed frog) protein is Transcriptional regulator Kaiso (zbtb33).